Reading from the N-terminus, the 262-residue chain is Thiazole synthase (262 aa).

Lys-105 serves as the catalytic Schiff-base intermediate with DXP. Residues Gly-166, 192–193 (AG), and 214–215 (NT) each bind 1-deoxy-D-xylulose 5-phosphate.

The protein belongs to the ThiG family. In terms of assembly, homotetramer. Forms heterodimers with either ThiH or ThiS.

The protein localises to the cytoplasm. It catalyses the reaction [ThiS sulfur-carrier protein]-C-terminal-Gly-aminoethanethioate + 2-iminoacetate + 1-deoxy-D-xylulose 5-phosphate = [ThiS sulfur-carrier protein]-C-terminal Gly-Gly + 2-[(2R,5Z)-2-carboxy-4-methylthiazol-5(2H)-ylidene]ethyl phosphate + 2 H2O + H(+). The protein operates within cofactor biosynthesis; thiamine diphosphate biosynthesis. In terms of biological role, catalyzes the rearrangement of 1-deoxy-D-xylulose 5-phosphate (DXP) to produce the thiazole phosphate moiety of thiamine. Sulfur is provided by the thiocarboxylate moiety of the carrier protein ThiS. In vitro, sulfur can be provided by H(2)S. The polypeptide is Thiazole synthase (Phenylobacterium zucineum (strain HLK1)).